Consider the following 562-residue polypeptide: Probable tRNA (uracil-O(2)-)-methyltransferase (562 aa).

The tract at residues 520 to 546 is disordered; it reads VSRRQQTNPKKQEATNRPKQPCWMSLN. The C3H1-type zinc-finger motif lies at 535-562; that stretch reads NRPKQPCWMSLNHPDGCPLGPESCRYLH.

It belongs to the TRM44 family.

It is found in the cytoplasm. It catalyses the reaction uridine(44) in tRNA(Ser) + S-adenosyl-L-methionine = 2'-O-methyluridine(44) in tRNA(Ser) + S-adenosyl-L-homocysteine + H(+). Functionally, probable adenosyl-L-methionine (AdoMet)-dependent tRNA (uracil-O(2)-)-methyltransferase. The protein is Probable tRNA (uracil-O(2)-)-methyltransferase of Caenorhabditis briggsae.